The chain runs to 46 residues: Protein krueppel (46 aa).

C2H2-type zinc fingers lie at residues 1–4 (MRLH), 10–32 (YQCL…LRVH), and 38–46 (YACEICPSR).

This sequence belongs to the krueppel C2H2-type zinc-finger protein family.

The protein localises to the nucleus. Its function is as follows. Krueppel is a gap class segmentation protein. The polypeptide is Protein krueppel (Kr) (Pholcus phalangioides (Longbodied cellar spider)).